The chain runs to 225 residues: U2 small nuclear ribonucleoprotein B'' (225 aa).

An RRM 1 domain is found at 7-86 (HTIYINNMND…KPMRIQYAKT (80 aa)). The interval 100-144 (DKEKKKEKKKAKTMEQAAAAANKKPGQGTPNAANTQGTAAPNPQV) is disordered. The residue at position 111 (lysine 111) is an N6-acetyllysine; alternate. A Glycyl lysine isopeptide (Lys-Gly) (interchain with G-Cter in SUMO2); alternate cross-link involves residue lysine 111. Residues 113–123 (MEQAAAAANKK) show a composition bias toward low complexity. Positions 127–140 (GTPNAANTQGTAAP) are enriched in polar residues. At tyrosine 151 the chain carries Phosphotyrosine. The 75-residue stretch at 151–225 (YILFLNNLPE…HAMKITYAKK (75 aa)) folds into the RRM 2 domain.

The protein belongs to the RRM U1 A/B'' family. In terms of assembly, identified in the spliceosome B complex. Identified in the spliceosome C complex. Present in a spliceosome complex assembled in vitro, and composed of SNRPB2, HPRP8BP and CRNKL1. Contributes to the binding of stem loop IV of U2 snRNA with SNRPP1.

The protein localises to the nucleus. Involved in pre-mRNA splicing as component of the spliceosome. Associated with sn-RNP U2, where it contributes to the binding of stem loop IV of U2 snRNA. This Mus musculus (Mouse) protein is U2 small nuclear ribonucleoprotein B'' (Snrpb2).